A 199-amino-acid chain; its full sequence is MSDRLVHLAANLEKVLGKRVQSIEIALGEVTVVVNADTYFESAMLMRDDPSLAFEQLIDLCGVDYQDFRDGAWNGQRFGVVSHLLSLEHNWRLRVRVFAPDDSYPLVASITPVWSSANWFEREAFDLYGIIFEGHEDLRRILTDYGFIGHPFRKDFPISGNVEMRYDPELKRVVYQPVTIEAREITPRIVREEQYGDPV.

This sequence belongs to the complex I 30 kDa subunit family. As to quaternary structure, NDH-1 is composed of 14 different subunits. Subunits NuoB, C, D, E, F, and G constitute the peripheral sector of the complex.

Its subcellular location is the cell membrane. It catalyses the reaction a quinone + NADH + 5 H(+)(in) = a quinol + NAD(+) + 4 H(+)(out). In terms of biological role, NDH-1 shuttles electrons from NADH, via FMN and iron-sulfur (Fe-S) centers, to quinones in the respiratory chain. The immediate electron acceptor for the enzyme in this species is believed to be ubiquinone. Couples the redox reaction to proton translocation (for every two electrons transferred, four hydrogen ions are translocated across the cytoplasmic membrane), and thus conserves the redox energy in a proton gradient. The protein is NADH-quinone oxidoreductase subunit C of Polynucleobacter asymbioticus (strain DSM 18221 / CIP 109841 / QLW-P1DMWA-1) (Polynucleobacter necessarius subsp. asymbioticus).